The primary structure comprises 151 residues: UPF0178 protein YaiI (151 aa).

Belongs to the UPF0178 family.

This is UPF0178 protein YaiI from Salmonella paratyphi B (strain ATCC BAA-1250 / SPB7).